Consider the following 474-residue polypeptide: Cysteine--tRNA ligase (474 aa).

C27 contributes to the Zn(2+) binding site. Residues 29-39 (PTVYNYIHIGN) carry the 'HIGH' region motif. Zn(2+) is bound by residues C212, H237, and E241. Positions 271–275 (KMSKS) match the 'KMSKS' region motif. An ATP-binding site is contributed by K274.

This sequence belongs to the class-I aminoacyl-tRNA synthetase family. As to quaternary structure, monomer. Zn(2+) serves as cofactor.

It localises to the cytoplasm. The catalysed reaction is tRNA(Cys) + L-cysteine + ATP = L-cysteinyl-tRNA(Cys) + AMP + diphosphate. In Lactobacillus delbrueckii subsp. bulgaricus (strain ATCC BAA-365 / Lb-18), this protein is Cysteine--tRNA ligase.